Reading from the N-terminus, the 140-residue chain is Probable prefoldin subunit 6 (140 aa).

The protein belongs to the prefoldin subunit beta family. Heterohexamer of two PFD-alpha type and four PFD-beta type subunits.

Binds specifically to cytosolic chaperonin (c-CPN) and transfers target proteins to it. Binds to nascent polypeptide chain and promotes folding in an environment in which there are many competing pathways for nonnative proteins. This Dictyostelium discoideum (Social amoeba) protein is Probable prefoldin subunit 6 (pfdn6).